The sequence spans 160 residues: Nucleotide-binding protein ASA_3207 (160 aa).

This sequence belongs to the YajQ family.

In terms of biological role, nucleotide-binding protein. This is Nucleotide-binding protein ASA_3207 from Aeromonas salmonicida (strain A449).